The following is a 157-amino-acid chain: MASKGVRLLLLLSWVAGPEVLSDILRPSCAPGWFYYRSHCYGYFRKLRNWSHAELECQSYGNGSHLASVLNQKEASVISKYITGYQRNLPVWIGLHDPQKKQLWQWTDGSTNLYRRWNPRTKSEARHCAEMNPKDKFLTWNKNGCANRQHFLCKYKT.

Positions Met1 to Ser22 are cleaved as a signal peptide. A disulfide bridge connects residues Cys29 and Cys40. A C-type lectin domain is found at Tyr36–Lys154. Asn49 and Asn62 each carry an N-linked (GlcNAc...) asparagine glycan. 2 cysteine pairs are disulfide-bonded: Cys57/Cys153 and Cys128/Cys145. A carbohydrate contacts are provided by residues Asp97–Gln102 and Lys134–Lys136.

The protein resides in the secreted. Its function is as follows. Calcium-independent lectin displaying mannose-binding specificity and able to maintain carbohydrate recognition activity in an acidic environment. May be involved in inflammatory and metaplastic responses of the gastrointestinal epithelium. The polypeptide is Regenerating islet-derived protein 4 (Reg4) (Mus musculus (Mouse)).